The primary structure comprises 96 residues: UPF0235 protein VCM66_0443 (96 aa).

Belongs to the UPF0235 family.

The chain is UPF0235 protein VCM66_0443 from Vibrio cholerae serotype O1 (strain M66-2).